Consider the following 282-residue polypeptide: 4-hydroxy-3-methylbut-2-enyl diphosphate reductase (282 aa).

Residue C12 participates in [4Fe-4S] cluster binding. (2E)-4-hydroxy-3-methylbut-2-enyl diphosphate is bound by residues H40 and H72. The dimethylallyl diphosphate site is built by H40 and H72. Residues H40 and H72 each contribute to the isopentenyl diphosphate site. C94 is a [4Fe-4S] cluster binding site. H122 is a binding site for (2E)-4-hydroxy-3-methylbut-2-enyl diphosphate. Residue H122 participates in dimethylallyl diphosphate binding. Residue H122 participates in isopentenyl diphosphate binding. E124 functions as the Proton donor in the catalytic mechanism. (2E)-4-hydroxy-3-methylbut-2-enyl diphosphate is bound at residue T160. Residue C188 participates in [4Fe-4S] cluster binding. 3 residues coordinate (2E)-4-hydroxy-3-methylbut-2-enyl diphosphate: S216, N218, and S260. Residues S216, N218, and S260 each coordinate dimethylallyl diphosphate. Isopentenyl diphosphate-binding residues include S216, N218, and S260.

This sequence belongs to the IspH family. It depends on [4Fe-4S] cluster as a cofactor.

It carries out the reaction isopentenyl diphosphate + 2 oxidized [2Fe-2S]-[ferredoxin] + H2O = (2E)-4-hydroxy-3-methylbut-2-enyl diphosphate + 2 reduced [2Fe-2S]-[ferredoxin] + 2 H(+). The catalysed reaction is dimethylallyl diphosphate + 2 oxidized [2Fe-2S]-[ferredoxin] + H2O = (2E)-4-hydroxy-3-methylbut-2-enyl diphosphate + 2 reduced [2Fe-2S]-[ferredoxin] + 2 H(+). The protein operates within isoprenoid biosynthesis; dimethylallyl diphosphate biosynthesis; dimethylallyl diphosphate from (2E)-4-hydroxy-3-methylbutenyl diphosphate: step 1/1. Its pathway is isoprenoid biosynthesis; isopentenyl diphosphate biosynthesis via DXP pathway; isopentenyl diphosphate from 1-deoxy-D-xylulose 5-phosphate: step 6/6. Functionally, catalyzes the conversion of 1-hydroxy-2-methyl-2-(E)-butenyl 4-diphosphate (HMBPP) into a mixture of isopentenyl diphosphate (IPP) and dimethylallyl diphosphate (DMAPP). Acts in the terminal step of the DOXP/MEP pathway for isoprenoid precursor biosynthesis. This is 4-hydroxy-3-methylbut-2-enyl diphosphate reductase from Geobacter sulfurreducens (strain ATCC 51573 / DSM 12127 / PCA).